We begin with the raw amino-acid sequence, 451 residues long: Tubulin alpha-1A chain (451 aa).

GTP-binding residues include G10, Q11, A12, and Q15. Residue K40 is modified to N6-acetyllysine. GTP is bound by residues E71, A99, S140, G143, G144, T145, G146, T179, E183, N206, Y224, N228, and L252. E71 serves as a coordination point for Mg(2+). The active site involves E254. The residue at position 282 (Y282) is a 3'-nitrotyrosine. S439 carries the phosphoserine modification. A 5-glutamyl polyglutamate mark is found at E443 and E445. Y451 is modified (3'-nitrotyrosine).

Belongs to the tubulin family. Heterodimer of alpha- and beta-tubulin. A typical microtubule is a hollow water-filled tube with an outer diameter of 25 nm and an inner diameter of 15 nM. Alpha-beta heterodimers associate head-to-tail to form protofilaments running lengthwise along the microtubule wall with the beta-tubulin subunit facing the microtubule plus end conferring a structural polarity. Microtubules usually have 13 protofilaments but different protofilament numbers can be found in some organisms and specialized cells. Interacts with gamma-tubulin; the interaction allows microtubules to nucleate from the gamma-tubulin ring complex (gTuRC). Nascent microtubule interacts (via alpha-tubulin MREC motif) with TTC5/STRAP; this interaction may result in tubulin mRNA-targeted degradation. Component of sperm flagellar doublet microtubules. Mg(2+) serves as cofactor. Some glutamate residues at the C-terminus are polyglycylated, resulting in polyglycine chains on the gamma-carboxyl group. Glycylation is mainly limited to tubulin incorporated into axonemes (cilia and flagella) whereas glutamylation is prevalent in neuronal cells, centrioles, axonemes, and the mitotic spindle. Both modifications can coexist on the same protein on adjacent residues, and lowering polyglycylation levels increases polyglutamylation, and reciprocally. Cilia and flagella glycylation is required for their stability and maintenance. Flagella glycylation controls sperm motility. In terms of processing, some glutamate residues at the C-terminus are polyglutamylated, resulting in polyglutamate chains on the gamma-carboxyl group. Polyglutamylation plays a key role in microtubule severing by spastin (SPAST). SPAST preferentially recognizes and acts on microtubules decorated with short polyglutamate tails: severing activity by SPAST increases as the number of glutamates per tubulin rises from one to eight, but decreases beyond this glutamylation threshold. Glutamylation is also involved in cilia motility. Post-translationally, acetylation of alpha chains at Lys-40 is located inside the microtubule lumen. This modification has been correlated with increased microtubule stability, intracellular transport and ciliary assembly. Methylation of alpha chains at Lys-40 is found in mitotic microtubules and is required for normal mitosis and cytokinesis contributing to genomic stability. In terms of processing, nitration of Tyr-451 is irreversible and interferes with normal dynein intracellular distribution. Post-translationally, undergoes a tyrosination/detyrosination cycle, the cyclic removal and re-addition of a C-terminal tyrosine residue by the enzymes tubulin tyrosine carboxypeptidase (MATCAP1, VASH1 or VASH2) and tubulin tyrosine ligase (TTL), respectively. Tyrosination promotes microtubule interaction with CAP-Gly domain-containing proteins such as CLIP1, CLIP2 and DCTN1. Tyrosination regulates the initiation of dynein-dynactin motility via interaction with DCTN1, which brings the dynein-dynactin complex into contact with microtubules. In neurons, tyrosinated tubulins mediate the initiation of retrograde vesicle transport. In terms of processing, detyrosination is involved in metaphase plate congression by guiding chromosomes during mitosis: detyrosination promotes interaction with CENPE, promoting pole-proximal transport of chromosomes toward the equator. Detyrosination increases microtubules-dependent mechanotransduction in dystrophic cardiac and skeletal muscle. In cardiomyocytes, detyrosinated microtubules are required to resist to contractile compression during contraction: detyrosination promotes association with desmin (DES) at force-generating sarcomeres, leading to buckled microtubules and mechanical resistance to contraction.

Its subcellular location is the cytoplasm. The protein localises to the cytoskeleton. It is found in the flagellum axoneme. The enzyme catalyses GTP + H2O = GDP + phosphate + H(+). Functionally, tubulin is the major constituent of microtubules, protein filaments consisting of alpha- and beta-tubulin heterodimers. Microtubules grow by the addition of GTP-tubulin dimers to the microtubule end, where a stabilizing cap forms. Below the cap, tubulin dimers are in GDP-bound state, owing to GTPase activity of alpha-tubulin. In Sus scrofa (Pig), this protein is Tubulin alpha-1A chain (TUBA1A).